Reading from the N-terminus, the 382-residue chain is Mannitol-1-phosphate 5-dehydrogenase (382 aa).

Residue 3–14 (ALHFGAGNIGRG) coordinates NAD(+). An N6-acetyllysine modification is found at lysine 269.

It belongs to the mannitol dehydrogenase family.

It catalyses the reaction D-mannitol 1-phosphate + NAD(+) = beta-D-fructose 6-phosphate + NADH + H(+). The chain is Mannitol-1-phosphate 5-dehydrogenase from Escherichia coli (strain K12 / MC4100 / BW2952).